A 315-amino-acid polypeptide reads, in one-letter code: Tyrosine recombinase XerC (315 aa).

The region spanning 13–104 (ADLAAAREEW…GVRSLLRHLE (92 aa)) is the Core-binding (CB) domain. A Tyr recombinase domain is found at 125–309 (SLPKPLTADD…DTQRLLEVYD (185 aa)). Catalysis depends on residues R168, K193, H261, R264, and H287. Y296 acts as the O-(3'-phospho-DNA)-tyrosine intermediate in catalysis.

The protein belongs to the 'phage' integrase family. XerC subfamily. Forms a cyclic heterotetrameric complex composed of two molecules of XerC and two molecules of XerD.

It is found in the cytoplasm. Its function is as follows. Site-specific tyrosine recombinase, which acts by catalyzing the cutting and rejoining of the recombining DNA molecules. The XerC-XerD complex is essential to convert dimers of the bacterial chromosome into monomers to permit their segregation at cell division. It also contributes to the segregational stability of plasmids. The sequence is that of Tyrosine recombinase XerC from Brucella melitensis biotype 1 (strain ATCC 23456 / CCUG 17765 / NCTC 10094 / 16M).